The primary structure comprises 503 residues: Probable cytosol aminopeptidase (503 aa).

The Mn(2+) site is built by lysine 268 and aspartate 273. The active site involves lysine 280. The Mn(2+) site is built by aspartate 291, aspartate 350, and glutamate 352. Arginine 354 is an active-site residue.

Belongs to the peptidase M17 family. Requires Mn(2+) as cofactor.

Its subcellular location is the cytoplasm. It carries out the reaction Release of an N-terminal amino acid, Xaa-|-Yaa-, in which Xaa is preferably Leu, but may be other amino acids including Pro although not Arg or Lys, and Yaa may be Pro. Amino acid amides and methyl esters are also readily hydrolyzed, but rates on arylamides are exceedingly low.. The catalysed reaction is Release of an N-terminal amino acid, preferentially leucine, but not glutamic or aspartic acids.. Functionally, presumably involved in the processing and regular turnover of intracellular proteins. Catalyzes the removal of unsubstituted N-terminal amino acids from various peptides. This is Probable cytosol aminopeptidase from Methylobacterium radiotolerans (strain ATCC 27329 / DSM 1819 / JCM 2831 / NBRC 15690 / NCIMB 10815 / 0-1).